The sequence spans 483 residues: Aspartyl/glutamyl-tRNA(Asn/Gln) amidotransferase subunit B (483 aa).

Belongs to the GatB/GatE family. GatB subfamily. Heterotrimer of A, B and C subunits.

The enzyme catalyses L-glutamyl-tRNA(Gln) + L-glutamine + ATP + H2O = L-glutaminyl-tRNA(Gln) + L-glutamate + ADP + phosphate + H(+). It carries out the reaction L-aspartyl-tRNA(Asn) + L-glutamine + ATP + H2O = L-asparaginyl-tRNA(Asn) + L-glutamate + ADP + phosphate + 2 H(+). Functionally, allows the formation of correctly charged Asn-tRNA(Asn) or Gln-tRNA(Gln) through the transamidation of misacylated Asp-tRNA(Asn) or Glu-tRNA(Gln) in organisms which lack either or both of asparaginyl-tRNA or glutaminyl-tRNA synthetases. The reaction takes place in the presence of glutamine and ATP through an activated phospho-Asp-tRNA(Asn) or phospho-Glu-tRNA(Gln). The polypeptide is Aspartyl/glutamyl-tRNA(Asn/Gln) amidotransferase subunit B (Lachnospira eligens (strain ATCC 27750 / DSM 3376 / VPI C15-48 / C15-B4) (Eubacterium eligens)).